Here is a 584-residue protein sequence, read N- to C-terminus: A-type ATP synthase subunit A (584 aa).

234 to 241 (GPFGSGKT) provides a ligand contact to ATP.

Belongs to the ATPase alpha/beta chains family. Has multiple subunits with at least A(3), B(3), C, D, E, F, H, I and proteolipid K(x).

The protein localises to the cell membrane. It carries out the reaction ATP + H2O + 4 H(+)(in) = ADP + phosphate + 5 H(+)(out). Its function is as follows. Component of the A-type ATP synthase that produces ATP from ADP in the presence of a proton gradient across the membrane. The A chain is the catalytic subunit. The protein is A-type ATP synthase subunit A of Methanoculleus marisnigri (strain ATCC 35101 / DSM 1498 / JR1).